Consider the following 209-residue polypeptide: MSISKAIAADLLEIKAVSLSPSQPFTWASGIKSPIYTDNRVTLAYPEVRSQIEGAFAELIKAEFPEVEVIAGTATAGIPHGAIIADYLKLPFAYIRSKPKDHGAGNQVEGRVTKGQKMVVVEDLISTGGSVLEAVAAAEREGADVLGVVAIFTYELEKANRKFADAGVKLATLTTYSELIEIAKETGYVTKEELELLKKFKENQETWQN.

5-phospho-alpha-D-ribose 1-diphosphate contacts are provided by residues R96, K100, H102, and 122 to 130 (EDLISTGGS). S126 contributes to the orotate binding site.

The protein belongs to the purine/pyrimidine phosphoribosyltransferase family. PyrE subfamily. Homodimer. It depends on Mg(2+) as a cofactor.

The enzyme catalyses orotidine 5'-phosphate + diphosphate = orotate + 5-phospho-alpha-D-ribose 1-diphosphate. The protein operates within pyrimidine metabolism; UMP biosynthesis via de novo pathway; UMP from orotate: step 1/2. In terms of biological role, catalyzes the transfer of a ribosyl phosphate group from 5-phosphoribose 1-diphosphate to orotate, leading to the formation of orotidine monophosphate (OMP). This chain is Orotate phosphoribosyltransferase, found in Lactococcus lactis subsp. lactis (strain IL1403) (Streptococcus lactis).